The primary structure comprises 155 residues: Ribonuclease H (155 aa).

An RNase H type-1 domain is found at 9 to 150 (DGQQVEMWTD…ADALANQGME (142 aa)). The Mg(2+) site is built by aspartate 18, glutamate 56, aspartate 78, and aspartate 142.

It belongs to the RNase H family. Monomer. Requires Mg(2+) as cofactor.

The protein resides in the cytoplasm. It catalyses the reaction Endonucleolytic cleavage to 5'-phosphomonoester.. Endonuclease that specifically degrades the RNA of RNA-DNA hybrids. This chain is Ribonuclease H, found in Bordetella pertussis (strain Tohama I / ATCC BAA-589 / NCTC 13251).